The chain runs to 474 residues: Replication factor C large subunit (474 aa).

45–52 is an ATP binding site; it reads GPPGCGKT. The span at 415–468 shows a compositional bias: basic and acidic residues; the sequence is DKKTNNKKGKENKTKNTTKKIKEIKETPKKEEVKEPKKQIEKQKSEKKEPKKQM. A disordered region spans residues 415–474; it reads DKKTNNKKGKENKTKNTTKKIKEIKETPKKEEVKEPKKQIEKQKSEKKEPKKQMTLESFF.

Belongs to the activator 1 small subunits family. RfcL subfamily. As to quaternary structure, heteromultimer composed of small subunits (RfcS) and large subunits (RfcL).

In terms of biological role, part of the RFC clamp loader complex which loads the PCNA sliding clamp onto DNA. The polypeptide is Replication factor C large subunit (Methanococcus aeolicus (strain ATCC BAA-1280 / DSM 17508 / OCM 812 / Nankai-3)).